The sequence spans 329 residues: DNA-directed RNA polymerase subunit alpha (329 aa).

The alpha N-terminal domain (alpha-NTD) stretch occupies residues 1–235 (MQGSVTEFLK…EQLEAFVDLR (235 aa)). The alpha C-terminal domain (alpha-CTD) stretch occupies residues 249-329 (FDPILLRPVD…NWPPASIADE (81 aa)).

This sequence belongs to the RNA polymerase alpha chain family. In terms of assembly, homodimer. The RNAP catalytic core consists of 2 alpha, 1 beta, 1 beta' and 1 omega subunit. When a sigma factor is associated with the core the holoenzyme is formed, which can initiate transcription.

It carries out the reaction RNA(n) + a ribonucleoside 5'-triphosphate = RNA(n+1) + diphosphate. DNA-dependent RNA polymerase catalyzes the transcription of DNA into RNA using the four ribonucleoside triphosphates as substrates. This Pectobacterium atrosepticum (strain SCRI 1043 / ATCC BAA-672) (Erwinia carotovora subsp. atroseptica) protein is DNA-directed RNA polymerase subunit alpha.